A 427-amino-acid chain; its full sequence is Tol-Pal system protein TolB (427 aa).

The signal sequence occupies residues 1 to 23 (MKLLKRLVSVFAIVLAVGSNAFA).

Belongs to the TolB family. As to quaternary structure, the Tol-Pal system is composed of five core proteins: the inner membrane proteins TolA, TolQ and TolR, the periplasmic protein TolB and the outer membrane protein Pal. They form a network linking the inner and outer membranes and the peptidoglycan layer.

The protein resides in the periplasm. Its function is as follows. Part of the Tol-Pal system, which plays a role in outer membrane invagination during cell division and is important for maintaining outer membrane integrity. This chain is Tol-Pal system protein TolB, found in Haemophilus influenzae (strain 86-028NP).